The following is a 969-amino-acid chain: Aspartic protease 5 (969 aa).

A signal peptide spans 1-22 (MEAGAMGGSSFLSFSSGPSAET). Residues 1–45 (MEAGAMGGSSFLSFSSGPSAETSPSSLSPPTSSSPSPSPQLVSDS) show a composition bias toward low complexity. Disordered stretches follow at residues 1-65 (MEAG…SSRT), 79-104 (ENEAAPTISQEERRGGSMTAASAGHL), 128-149 (SSATSVLSLGGERGRPPSRSSS), 173-193 (SSSSPLSPLPHPRGAPASACG), and 311-382 (FLSL…DLPR). The Lumenal segment spans residues 23–820 (SPSSLSPPTS…PEGLPLSPQQ (798 aa)). Low complexity predominate over residues 311–324 (FLSLSSSPRSLASD). Basic and acidic residues predominate over residues 335–355 (QSREQRGEREGERQRPDKGEE). The Peptidase A1 domain maps to 413–758 (YFLDILVGTP…DREQDRVGFA (346 aa)). The active site involves aspartate 431. The segment at 608 to 635 (PPESESTPATEALRPVAGESASRRISEK) is disordered. Aspartate 682 is a catalytic residue. The segment at 768-794 (DQRPRGPDSGDGPKGRPTAPFTVPPLR) is disordered. Basic and acidic residues predominate over residues 769–781 (QRPRGPDSGDGPK). The chain crosses the membrane as a helical span at residues 821–841 (LWVAAALVVVAILIAVTVILL). At 842 to 969 (HTIKRPSRSS…TLLDLPLGGE (128 aa)) the chain is on the cytoplasmic side. A disordered region spans residues 922–969 (EDDGDFFGDDSVPSAEEQETAPSLSLREESSPFSASQSTLLDLPLGGE). The segment covering 952-961 (SPFSASQSTL) has biased composition (polar residues).

This sequence belongs to the peptidase A1 family. In terms of processing, may be auto-cleaved to produce a 55 kDa form.

Its subcellular location is the golgi apparatus membrane. Functionally, in tachyzoites, plays an essential role in the export of several dense granule proteins into the host cell by cleaving the localization motif RRLxx (termed Toxoplasma export element (TEXEL)) located downstream of the N-terminal secretory signal sequence. However, can also regulate the export of proteins that lack the TEXEL motif, such as GRA24. Requires Arg at P3 and P2, and Leu at P1 in the substrate TEXEL motif and, specifically, cleaves after Leu. Cleaves GRA16; proteolytic cleavage is essential for the correct trafficking of GRA16 from the parasite into the infected host nucleus. Cleaves GRA19 and GRA20. Cleaves MYR1. Cleaves LCAT, GRA44, GRA46, GRA46, ROP35/WNG1 and ROP34/WNG2. By regulating the export of dense granule proteins into the host cell, regulates multiple processes during tachyzoite infection of host cells, including recruitment of host mitochondria to the parasitophorous vacuole (PV), formation of the nanotubular network (NTN) or intravacuolar network (IVN) which are membranous tubules that bud from the PV membrane into the vacuolar lumen and, up-regulation of host cell genes to facilitate the parasite infection and modulate the host innate immune response. At the bradyzoite stage, also involved in the formation of the cyst wall. This chain is Aspartic protease 5, found in Toxoplasma gondii.